Reading from the N-terminus, the 517-residue chain is Acetyl-coenzyme A carboxylase carboxyl transferase subunit beta, chloroplastic (517 aa).

Composition is skewed to basic and acidic residues over residues 1 to 17 (MKPT…KSNE), 24 to 41 (GDNK…KSNE), 48 to 65 (GDNK…KSNE), and 72 to 81 (GDKQKDKKDG). Disordered stretches follow at residues 1-179 (MKPT…KEEE) and 204-234 (KHRD…DSEA). Positions 87 to 131 (YDDEYEEDLEYDDEYEEDLEYDDEYEEDLEYDDEEYDDEYEEDLE) are enriched in acidic residues. Basic and acidic residues-rich tracts occupy residues 132-179 (GDNK…KEEE) and 209-229 (KSVP…RDTD). The CoA carboxyltransferase N-terminal domain occupies 243 to 514 (LWVHCKLCSG…NSQVINIYNY (272 aa)). Zn(2+) is bound by residues Cys-247, Cys-250, Cys-266, and Cys-269. The C4-type zinc finger occupies 247–269 (CKLCSGFNYKKILKSKNNVCEQC).

This sequence belongs to the AccD/PCCB family. In terms of assembly, acetyl-CoA carboxylase is a heterohexamer composed of biotin carboxyl carrier protein, biotin carboxylase and 2 subunits each of ACCase subunit alpha and ACCase plastid-coded subunit beta (accD). It depends on Zn(2+) as a cofactor.

It is found in the plastid. The protein localises to the chloroplast stroma. It carries out the reaction N(6)-carboxybiotinyl-L-lysyl-[protein] + acetyl-CoA = N(6)-biotinyl-L-lysyl-[protein] + malonyl-CoA. It functions in the pathway lipid metabolism; malonyl-CoA biosynthesis; malonyl-CoA from acetyl-CoA: step 1/1. Its function is as follows. Component of the acetyl coenzyme A carboxylase (ACC) complex. Biotin carboxylase (BC) catalyzes the carboxylation of biotin on its carrier protein (BCCP) and then the CO(2) group is transferred by the transcarboxylase to acetyl-CoA to form malonyl-CoA. This chain is Acetyl-coenzyme A carboxylase carboxyl transferase subunit beta, chloroplastic, found in Oenothera elata subsp. hookeri (Hooker's evening primrose).